The primary structure comprises 523 residues: Pentatricopeptide repeat-containing protein At1g52640, mitochondrial (523 aa).

The N-terminal 5 residues, 1 to 5, are a transit peptide targeting the mitochondrion; the sequence is MAIRT. 10 PPR repeats span residues 101-135, 137-171, 172-206, 207-241, 242-276, 277-311, 312-346, 347-381, 382-416, and 417-452; these read SLES…NYFE, SSKV…GIKP, CVDD…GIVP, SAKT…NCVV, DLLA…GLKP, DAYS…DLVP, NVYT…GANP, DTWT…KCLP, DRHT…KFYP, and TVAT…GIPP. Residues 498-523 form a disordered region; the sequence is KRRRLGRRSENSEDDDDDFELERDTI. Residues 509-523 are compositionally biased toward acidic residues; it reads SEDDDDDFELERDTI.

Belongs to the PPR family. P subfamily.

The protein resides in the mitochondrion. The protein is Pentatricopeptide repeat-containing protein At1g52640, mitochondrial of Arabidopsis thaliana (Mouse-ear cress).